Consider the following 20-residue polypeptide: AIVEQQGAPXGLGRIINKXK.

A disordered region spans residues 1-20 (AIVEQQGAPXGLGRIINKXK).

This sequence belongs to the peptidase S8 family.

It is found in the secreted. Functionally, capable of breaching the insect cuticle. This Metacordyceps chlamydosporia (Nematophagous fungus) protein is Cuticle-degrading protease-like protein.